The primary structure comprises 142 residues: Small heat shock protein IbpB (142 aa).

Positions 26–137 (AGESQSFPPY…AAQRIAISER (112 aa)) constitute a sHSP domain.

It belongs to the small heat shock protein (HSP20) family. In terms of assembly, homodimer. Forms homomultimers of about 100-150 subunits at optimal growth temperatures. Conformation changes to oligomers at high temperatures or high ionic concentrations. The decrease in size of the multimers is accompanied by an increase in chaperone activity.

It localises to the cytoplasm. Functionally, associates with aggregated proteins, together with IbpA, to stabilize and protect them from irreversible denaturation and extensive proteolysis during heat shock and oxidative stress. Aggregated proteins bound to the IbpAB complex are more efficiently refolded and reactivated by the ATP-dependent chaperone systems ClpB and DnaK/DnaJ/GrpE. Its activity is ATP-independent. The protein is Small heat shock protein IbpB of Escherichia coli O7:K1 (strain IAI39 / ExPEC).